Here is a 703-residue protein sequence, read N- to C-terminus: DnaJ homolog subfamily C member 14 (703 aa).

Disordered stretches follow at residues 1-150 and 164-229; these read MAQK…DGSS and EDEE…RKRS. A compositionally biased stretch (low complexity) spans 17-28; the sequence is SGGSSLITSGSS. Over residues 75–84 the composition is skewed to pro residues; that stretch reads HGPPRGPGPP. Composition is skewed to acidic residues over residues 89–102 and 164–176; these read YPDE…ESGV and EDEE…DDEE. A compositionally biased stretch (basic residues) spans 193–202; the sequence is PPSRRQRHRF. Positions 203 to 218 are enriched in basic and acidic residues; sequence LTKEDVRDSGRRDPKA. Residues 219–228 are compositionally biased toward basic residues; the sequence is PGRHRLARKR. 3 helical membrane-spanning segments follow: residues 254–274, 305–325, and 327–347; these read WWLI…GYLI, VMFQ…IRLL, and VVGA…QLGW. Residues 444–508 enclose the J domain; the sequence is NPFHVLGVEA…ERRKEYEMKR (65 aa). Disordered regions lie at residues 622–643 and 659–703; these read FGSR…PPAD and MSNG…PFQR. Positions 673-684 are enriched in polar residues; sequence GTTSTSRPNSSV. Positions 691 to 703 are enriched in basic residues; the sequence is PKRRKKVRRPFQR.

In terms of assembly, interacts with the FxxxFxxxF motif of DRD1 via its C-terminal domain. Detected in heart, brain, lung, liver, skeletal muscle, kidney and testis.

It localises to the endoplasmic reticulum membrane. Functionally, regulates the export of target proteins, such as DRD1, from the endoplasmic reticulum to the cell surface. This is DnaJ homolog subfamily C member 14 (Dnajc14) from Rattus norvegicus (Rat).